The following is a 335-amino-acid chain: 3-ketodihydrosphingosine reductase TSC10 (335 aa).

Residues Gly-42, Ser-44, Ser-45, and Gly-46 each contribute to the NADPH site. The GXSXG motif lies at 42-46 (GGSSG). An NADP(+)-binding site is contributed by Leu-47. Positions 67, 68, 71, 95, and 96 each coordinate NADPH. Asp-95 contributes to the NADP(+) binding site. Residues Tyr-190, Lys-194, and Ile-223 each contribute to the NADP(+) site. Tyr-190 (proton acceptor) is an active-site residue. Residue Lys-194 is the Lowers pKa of active site Tyr of the active site. A helical transmembrane segment spans residues 288-308 (TNNFLLDTLWLIVSSVGVPIW).

This sequence belongs to the short-chain dehydrogenases/reductases (SDR) family.

It is found in the endoplasmic reticulum membrane. It carries out the reaction sphinganine + NADP(+) = 3-oxosphinganine + NADPH + H(+). Its pathway is lipid metabolism; sphingolipid metabolism. Functionally, catalyzes the reduction of 3'-oxosphinganine (3-ketodihydrosphingosine/KDS) to sphinganine (dihydrosphingosine/DHS), the second step of de novo sphingolipid biosynthesis. The chain is 3-ketodihydrosphingosine reductase TSC10 (TSC10) from Cryptococcus neoformans var. neoformans serotype D (strain B-3501A) (Filobasidiella neoformans).